A 549-amino-acid chain; its full sequence is Glucose-6-phosphate isomerase (549 aa).

Glutamate 355 functions as the Proton donor in the catalytic mechanism. Active-site residues include histidine 387 and lysine 515.

Belongs to the GPI family.

Its subcellular location is the cytoplasm. It catalyses the reaction alpha-D-glucose 6-phosphate = beta-D-fructose 6-phosphate. It participates in carbohydrate biosynthesis; gluconeogenesis. Its pathway is carbohydrate degradation; glycolysis; D-glyceraldehyde 3-phosphate and glycerone phosphate from D-glucose: step 2/4. Catalyzes the reversible isomerization of glucose-6-phosphate to fructose-6-phosphate. The protein is Glucose-6-phosphate isomerase of Pasteurella multocida (strain Pm70).